A 467-amino-acid polypeptide reads, in one-letter code: MENLKKRFDVLQDLLMNIYEQGSDTLESQIEHWQALRREAVLLYYARQNGVLRLGYLPVPPLATSEAKAKQAISMVLQLQSLQQSPYGTEKWTLVDTSIETFKNTPENHFKKGPINVEVIYDGDPDNANLYTMWKYVYYMDDNDQWQKTESGANHTGIYYLIGEFKHYYVLFADDANRYSKSGQWEVRINKETVFAPVTSSTPPDSPGGSRELPGSTANSKASSPTQQPQQACSDETTKRKRYGRRESSPTDSRCRRRSSSRQKKQGRRARSRTRSRCSSTQTRSRSTSRRSRSTSRGNRRCRGDTPRGQRGVSTSSRGRGRGSRRSSSSSSPTPRTKASQRGCDTRSVRDSGISPGDVGRKLQTVSGRNSGRLGRLLEEALDPPVILLRGGANTLKCFRNRAKLRYRGHYKAFSTSWSWVAADGTERLGRSRLLVSFTSFKQRSGFLDLVRFPKGVDWSLGSFDKL.

The interval 1–201 is transactivation domain; sequence MENLKKRFDV…ETVFAPVTSS (201 aa). The segment at 196–367 is disordered; sequence APVTSSTPPD…DVGRKLQTVS (172 aa). Low complexity predominate over residues 197–210; sequence PVTSSTPPDSPGGS. Polar residues predominate over residues 216-235; sequence STANSKASSPTQQPQQACSD. A compositionally biased stretch (basic residues) spans 255–276; it reads CRRRSSSRQKKQGRRARSRTRS. Positions 277–286 are enriched in low complexity; it reads RCSSTQTRSR. Basic residues predominate over residues 287–301; the sequence is STSRRSRSTSRGNRR. Low complexity predominate over residues 309–318; it reads GQRGVSTSSR. Residues 383-467 are DNA-binding domain; sequence DPPVILLRGG…DWSLGSFDKL (85 aa).

The protein belongs to the papillomaviridae E2 protein family. As to quaternary structure, binds DNA as homodimer. Interacts with protein E1; this interaction greatly increases E1 DNA-binding activity. Interacts with protein L1; this interaction enhances E2-dependent replication and transcription activation. Interacts with protein L2; this interaction inhibits E2 transcriptional activity but not DNA replication function E2. Interacts with protein E7; this interaction inhibits E7 oncogenic activity. Interacts with host TAF1; this interaction modulates E2-dependent transcriptional regulation. Interacts with host BRD4; this interaction mediates E2 transcriptional activation function. Additionally, the interaction with host BRD4 on mitotic chromosomes mediates tethering of the viral genome. Interacts with host TOPBP1; this interaction is required for optimal viral DNA replication. Post-translationally, phosphorylated.

It is found in the host nucleus. In terms of biological role, plays a role in the initiation of viral DNA replication. A dimer of E2 interacts with a dimer of E1 in order to improve specificity of E1 DNA binding activity. Once the complex recognizes and binds DNA at specific sites, the E2 dimer is removed from DNA. E2 also regulates viral transcription through binding to the E2RE response element (5'-ACCNNNNNNGGT-3') present in multiple copies in the regulatory regions of the viral genome. Activates or represses transcription depending on E2RE's position with regards to proximal promoter elements including the TATA-box. Repression occurs by sterically hindering the assembly of the transcription initiation complex. The protein is Regulatory protein E2 of Human papillomavirus 24.